A 299-amino-acid chain; its full sequence is Acetylglutamate kinase (299 aa).

Substrate-binding positions include 72–73 (GG), arginine 94, and asparagine 196.

The protein belongs to the acetylglutamate kinase family. ArgB subfamily.

Its subcellular location is the cytoplasm. The enzyme catalyses N-acetyl-L-glutamate + ATP = N-acetyl-L-glutamyl 5-phosphate + ADP. It participates in amino-acid biosynthesis; L-arginine biosynthesis; N(2)-acetyl-L-ornithine from L-glutamate: step 2/4. Catalyzes the ATP-dependent phosphorylation of N-acetyl-L-glutamate. This is Acetylglutamate kinase from Burkholderia cenocepacia (strain HI2424).